The chain runs to 605 residues: F-box/WD repeat-containing protein pof1 (605 aa).

Positions 107–153 constitute an F-box domain; the sequence is LDFLSLLPVEISFRILSFLDARSLCQAAQVSKHWKELADDDVIWHRM. Over residues 195-212 the composition is skewed to basic and acidic residues; the sequence is GVDQAHESSPVKKAKLDD. A disordered region spans residues 195-231; the sequence is GVDQAHESSPVKKAKLDDYPTSSNEETISSVKPPSPN. Residues 214–231 are compositionally biased toward polar residues; the sequence is PTSSNEETISSVKPPSPN. Residues serine 229 and serine 232 each carry the phosphoserine modification. 7 WD repeats span residues 271-299, 311-339, 350-379, 390-420, 432-460, 472-500, and 510-538; these read GHSD…RLWN, GHSS…RIWN, HGHT…KLWH, GHTG…KIWS, AHIG…KQWD, GHIE…KVWE, and NHSE…YLWL.

In terms of assembly, a part of the E3 ubiquitin ligase Skp1-Cullin-1-F-box (SCF) complex. Interacts with cul1, skp1 and phosphorylated zip1.

It is found in the nucleus. Functionally, probably recognizes and binds to some phosphorylated proteins and promotes their ubiquitination and degradation. Required for the inactivation of zip1 via ubiquitination. The chain is F-box/WD repeat-containing protein pof1 (pof1) from Schizosaccharomyces pombe (strain 972 / ATCC 24843) (Fission yeast).